The sequence spans 297 residues: MVEVRVPATSANIGPGFDCLGVAVNMYNKFFVEEIEEGLIFEGCADKFKNENNLIYVAMKKCFDKIGYKPTGLRIKIESDIPVSRGLGSSAACVVGGIVSANELAGGALNKKELLDLAVEVEGHPDNVNPAFCGGMTASISDNREVIYSKVKVSEGIKFCALIPDFTLSTEKARAVLPKSIDYKDGIFNVGRTALMISALNNGDFHLIKYACKDKLHQDYRAKLIENFYSIKKQCEKLNSLGVFLSGAGPTIMVMLREEDKDFSKNIKSFLETLKNKWEVRELKIDKLGTVVNNCKV.

Residue 82–92 participates in ATP binding; that stretch reads PVSRGLGSSAA.

This sequence belongs to the GHMP kinase family. Homoserine kinase subfamily.

The protein resides in the cytoplasm. The catalysed reaction is L-homoserine + ATP = O-phospho-L-homoserine + ADP + H(+). It functions in the pathway amino-acid biosynthesis; L-threonine biosynthesis; L-threonine from L-aspartate: step 4/5. Its function is as follows. Catalyzes the ATP-dependent phosphorylation of L-homoserine to L-homoserine phosphate. This is Homoserine kinase from Clostridium botulinum (strain ATCC 19397 / Type A).